The chain runs to 182 residues: Bifunctional protein PyrR (182 aa).

The short motif at 99–111 is the PRPP-binding element; it reads IVLVDDVLFTGRT.

The protein belongs to the purine/pyrimidine phosphoribosyltransferase family. PyrR subfamily. In terms of assembly, homodimer and homohexamer; in equilibrium.

The enzyme catalyses UMP + diphosphate = 5-phospho-alpha-D-ribose 1-diphosphate + uracil. Functionally, regulates transcriptional attenuation of the pyrimidine nucleotide (pyr) operon by binding in a uridine-dependent manner to specific sites on pyr mRNA. This disrupts an antiterminator hairpin in the RNA and favors formation of a downstream transcription terminator, leading to a reduced expression of downstream genes. In terms of biological role, also displays a weak uracil phosphoribosyltransferase activity which is not physiologically significant. The protein is Bifunctional protein PyrR of Caldicellulosiruptor bescii (strain ATCC BAA-1888 / DSM 6725 / KCTC 15123 / Z-1320) (Anaerocellum thermophilum).